Reading from the N-terminus, the 119-residue chain is Large ribosomal subunit protein uL24 (119 aa).

It belongs to the universal ribosomal protein uL24 family. Part of the 50S ribosomal subunit.

Functionally, one of two assembly initiator proteins, it binds directly to the 5'-end of the 23S rRNA, where it nucleates assembly of the 50S subunit. One of the proteins that surrounds the polypeptide exit tunnel on the outside of the subunit. This chain is Large ribosomal subunit protein uL24, found in Paenarthrobacter aurescens (strain TC1).